The chain runs to 328 residues: Malate dehydrogenase (328 aa).

12–18 lines the NAD(+) pocket; it reads GAAGQIA. Positions 93 and 99 each coordinate substrate. Residues Asn-106, Gln-113, and 130–132 each bind NAD(+); that span reads VGN. 2 residues coordinate substrate: Asn-132 and Arg-163. Residue His-188 is the Proton acceptor of the active site.

It belongs to the LDH/MDH superfamily. MDH type 2 family.

It carries out the reaction (S)-malate + NAD(+) = oxaloacetate + NADH + H(+). Its function is as follows. Catalyzes the reversible oxidation of malate to oxaloacetate. The protein is Malate dehydrogenase of Burkholderia ambifaria (strain ATCC BAA-244 / DSM 16087 / CCUG 44356 / LMG 19182 / AMMD) (Burkholderia cepacia (strain AMMD)).